The primary structure comprises 199 residues: NAD(P)H dehydrogenase (quinone) (199 aa).

The region spanning 4–190 (MLVLYYSAYG…DGARFQGRRV (187 aa)) is the Flavodoxin-like domain. FMN-binding positions include 10 to 15 (SAYGYM) and 78 to 80 (TRY). Tyrosine 12 provides a ligand contact to NAD(+). Tryptophan 98 provides a ligand contact to substrate. FMN is bound by residues 113-119 (STATQHG) and histidine 134. The interval 157 to 181 (GGAPYGMTTTADGDGSRQPSAQELD) is disordered. Positions 163–177 (MTTTADGDGSRQPSA) are enriched in polar residues.

This sequence belongs to the WrbA family. It depends on FMN as a cofactor.

It catalyses the reaction a quinone + NADH + H(+) = a quinol + NAD(+). The enzyme catalyses a quinone + NADPH + H(+) = a quinol + NADP(+). The chain is NAD(P)H dehydrogenase (quinone) from Brucella melitensis biotype 2 (strain ATCC 23457).